A 307-amino-acid polypeptide reads, in one-letter code: MEGVVLLHKPKGMTSHDCVFKLRKILREKRIGHTGTLDPDVTGVLPICVGRATKIAQFLTSETKTYEGEVTLGFSTTTEDASGEVVETKHVDRVITRKEVEGALAALTGTIEQMPPMFSAVKVNGKKLYEYARAGQEVERPVRTITIHEFVLLDDREVFEGETISFRFRVTCSKGTYVRTLAVMIGEKLGFPSHMSHLVRTASGEFLLEDCISFEEIEENVQNGTVESIFISIDEALSKFPKMVVDEKQAEKIKNGMFLKNELQITAPFITVFDKNDRCLAIYEHHPKHPGMLKPMKVLVNNQELKL.

The Nucleophile role is filled by Asp-38.

It belongs to the pseudouridine synthase TruB family. Type 1 subfamily.

The catalysed reaction is uridine(55) in tRNA = pseudouridine(55) in tRNA. Its function is as follows. Responsible for synthesis of pseudouridine from uracil-55 in the psi GC loop of transfer RNAs. The sequence is that of tRNA pseudouridine synthase B from Bacillus thuringiensis (strain Al Hakam).